Here is a 157-residue protein sequence, read N- to C-terminus: 2-C-methyl-D-erythritol 2,4-cyclodiphosphate synthase (157 aa).

A divalent metal cation is bound by residues Asp8 and His10. 4-CDP-2-C-methyl-D-erythritol 2-phosphate contacts are provided by residues 8-10 (DVH) and 34-35 (HS). His42 serves as a coordination point for a divalent metal cation. Residues 56-58 (DIG), 61-65 (FPDTD), 100-106 (AQKPKMA), 132-135 (TTTE), and Phe139 each bind 4-CDP-2-C-methyl-D-erythritol 2-phosphate.

It belongs to the IspF family. As to quaternary structure, homotrimer. A divalent metal cation serves as cofactor.

The enzyme catalyses 4-CDP-2-C-methyl-D-erythritol 2-phosphate = 2-C-methyl-D-erythritol 2,4-cyclic diphosphate + CMP. Its pathway is isoprenoid biosynthesis; isopentenyl diphosphate biosynthesis via DXP pathway; isopentenyl diphosphate from 1-deoxy-D-xylulose 5-phosphate: step 4/6. Its function is as follows. Involved in the biosynthesis of isopentenyl diphosphate (IPP) and dimethylallyl diphosphate (DMAPP), two major building blocks of isoprenoid compounds. Catalyzes the conversion of 4-diphosphocytidyl-2-C-methyl-D-erythritol 2-phosphate (CDP-ME2P) to 2-C-methyl-D-erythritol 2,4-cyclodiphosphate (ME-CPP) with a corresponding release of cytidine 5-monophosphate (CMP). This is 2-C-methyl-D-erythritol 2,4-cyclodiphosphate synthase from Alkaliphilus oremlandii (strain OhILAs) (Clostridium oremlandii (strain OhILAs)).